A 162-amino-acid polypeptide reads, in one-letter code: Superoxide dismutase [Cu-Zn] (162 aa).

The N-terminal stretch at 1-20 (MNKSGIILIGTILFSSMAIA) is a signal peptide. 3 residues coordinate Cu cation: histidine 66, histidine 68, and histidine 83. Residues cysteine 73 and cysteine 158 are joined by a disulfide bond. Residues histidine 83, histidine 92, histidine 100, and aspartate 103 each contribute to the Zn(2+) site. Histidine 137 is a binding site for Cu cation.

This sequence belongs to the Cu-Zn superoxide dismutase family. Homodimer. Requires Cu cation as cofactor. Zn(2+) is required as a cofactor.

The protein resides in the periplasm. The catalysed reaction is 2 superoxide + 2 H(+) = H2O2 + O2. Functionally, destroys radicals which are normally produced within the cells and which are toxic to biological systems. The sequence is that of Superoxide dismutase [Cu-Zn] (sodC) from Legionella pneumophila.